A 210-amino-acid chain; its full sequence is Transcriptional regulator DauR (210 aa).

The protein belongs to the DauR family.

Functionally, dauR represses the dauBAR operon. This is Transcriptional regulator DauR from Pseudomonas aeruginosa (strain ATCC 15692 / DSM 22644 / CIP 104116 / JCM 14847 / LMG 12228 / 1C / PRS 101 / PAO1).